The sequence spans 240 residues: MSPAQIIRTSHSFPPSFTGTSSSAENSHAQSPQQVLTRAFVASGELNAAFGRTSTASAQDFTSLLGTLQRELEKKTPAFPDLAELANQLADAAMGDQGGHWLGRDEQQTLKGMIDRCKSQLAHTPASDASYDLLAQVCENLKKARLHQSISQMTGEAHAKVRGVPDLLALIQLDPDILAEKPVGMPSYVKFSSFICMAKARTAELSENLRNASNEVALLLHPHADTILEQGSLRLQIVGF.

The interval 1–32 is disordered; it reads MSPAQIIRTSHSFPPSFTGTSSSAENSHAQSP. Positions 9 to 23 are enriched in low complexity; that stretch reads TSHSFPPSFTGTSSS.

The protein belongs to the HopW family.

This is Putative truncated effector protein hopW1-2 (hopW1-2) from Pseudomonas syringae pv. maculicola.